Here is a 442-residue protein sequence, read N- to C-terminus: Cell division protein FtsA (442 aa).

The interval 401 to 428 is disordered; sequence VTSYDNDSYDAPEETVYDEPEQKKSDED. A compositionally biased stretch (acidic residues) spans 407 to 419; sequence DSYDAPEETVYDE.

This sequence belongs to the FtsA/MreB family. In terms of assembly, self-interacts. Interacts with FtsZ.

The protein resides in the cell membrane. Its function is as follows. Cell division protein that is involved in the assembly of the Z ring. May serve as a membrane anchor for the Z ring. This Enterococcus hirae protein is Cell division protein FtsA.